Consider the following 182-residue polypeptide: Mesencephalic astrocyte-derived neurotrophic factor (182 aa).

The signal sequence occupies residues 1–24 (MRRMWATQGLAVALALSVLPGSRA). Disulfide bonds link Cys30-Cys117, Cys33-Cys106, Cys64-Cys75, and Cys151-Cys154. Residue Tyr76 is modified to Phosphotyrosine. Residues 96–158 (LAHHIPVEKI…ETCKGCAEKS (63 aa)) form an interacts with ERN1, EIF2AK3 and ATF6 region. Residues 129–172 (TVDLKKLRVKELKKILDDWGETCKGCAEKSDYIRKINELMPKYA) form an interacts with HSPA5 region.

It belongs to the ARMET family. In terms of assembly, interacts directly (via SAP domain) with HSPA5/BiP; the interaction inhibits ATP binding to HSPA5/BiP and subsequent nucleotide exchange. Component of a complex containing at least CRELD2, MANF, MATN3 and PDIA4. Interacts (via C-terminus) with ERN1 (via luminal domain); the interaction is decreased in the presence of increasing concentrations of Ca(2+). Post-translationally, may contain sialic acid residues.

It localises to the secreted. The protein resides in the endoplasmic reticulum lumen. Its subcellular location is the sarcoplasmic reticulum lumen. Functionally, selectively promotes the survival of dopaminergic neurons of the ventral mid-brain. Modulates GABAergic transmission to the dopaminergic neurons of the substantia nigra. Enhances spontaneous, as well as evoked, GABAergic inhibitory postsynaptic currents in dopaminergic neurons. Inhibits cell proliferation and endoplasmic reticulum (ER) stress-induced cell death. Retained in the ER/sarcoplasmic reticulum (SR) through association with the endoplasmic reticulum chaperone protein HSPA5 under normal conditions. Stabilizes HSPA5/BiP in its substrate-bound ADP state, which facilitates HSPA5/BiP incorporation into chaperone-client complexes during endoplasmic reticulum stress, its interaction with HSPA5/BiP inhibits ATP binding to HSPA5/BiP and subsequent nucleotide exchange. As a result acts as a repressor of the unfolded protein response (UPR) pathway. Up-regulated and secreted by the ER/SR in response to ER stress and hypoxia. Following secretion by the ER/SR, directly binds to 3-O-sulfogalactosylceramide, a lipid sulfatide in the outer cell membrane of target cells. Sulfatide binding promotes its cellular uptake by endocytosis, and is required for its role in alleviating ER stress and cell toxicity under hypoxic and ER stress conditions. Essential for embryonic lung development. Required for the correct postnatal temporal and structural development of splenic white pulp. Required for the repair-associated myeloid response in skeletal muscle, acts as a regulator of phenotypic transition towards prorepair macrophages in response to muscle injury and as a result limits excessive proinflammatory signaling. Represses RELA expression and therefore NF-kB signaling in the myocardium, as a result limits macrophage infiltration of injured tissue and M1 macrophage differentiation in response to myocardial injury. Required for endochondral ossification in long bones and the skull during postnatal development. The polypeptide is Mesencephalic astrocyte-derived neurotrophic factor (Homo sapiens (Human)).